We begin with the raw amino-acid sequence, 490 residues long: Cytochrome P450 2C2 (490 aa).

Cys-435 is a heme binding site.

Belongs to the cytochrome P450 family. Requires heme as cofactor.

The protein localises to the endoplasmic reticulum membrane. Its subcellular location is the microsome membrane. It carries out the reaction an organic molecule + reduced [NADPH--hemoprotein reductase] + O2 = an alcohol + oxidized [NADPH--hemoprotein reductase] + H2O + H(+). Functionally, cytochromes P450 are a group of heme-thiolate monooxygenases. In liver microsomes, this enzyme is involved in an NADPH-dependent electron transport pathway. It oxidizes a variety of structurally unrelated compounds, including steroids, fatty acids, and xenobiotics. In the epoxidation of arachidonic acid it generates only 14,15- and 11,12-cis-epoxyeicosatrienoic acids. This is Cytochrome P450 2C2 (CYP2C2) from Oryctolagus cuniculus (Rabbit).